We begin with the raw amino-acid sequence, 969 residues long: ATP-dependent RNA helicase DBP10 (969 aa).

Disordered regions lie at residues 1–73 (MVKN…KVED) and 78–97 (SLEL…DDDD). The segment covering 32 to 59 (SDSESDDSSDGSDEEVQDVIEYSSDEEE) has biased composition (acidic residues). The Q motif motif lies at 115–143 (GSFASFGLSKLILVNISKRGFRQPTPIQR). A Helicase ATP-binding domain is found at 146 to 318 (IPLILQNRDI…KAGLVNPVLV (173 aa)). 159-166 (ARTGSGKT) contributes to the ATP binding site. Residues 266-269 (DEAD) carry the DEAD box motif. 3 disordered regions span residues 366–402 (QLND…PKAN), 860–924 (KTGA…LERG), and 946–969 (IRKD…KRKF). The span at 374–383 (DSDESAEEDE) shows a compositional bias: acidic residues. The segment covering 386–398 (KRRKRKSFNRKAM) has biased composition (basic residues). The 148-residue stretch at 396-543 (KAMPKANELP…PMYEALERLS (148 aa)) folds into the Helicase C-terminal domain. Residues 897 to 921 (EKAPRLPDKKRDDYHKQKKKVESAL) show a composition bias toward basic and acidic residues. The segment covering 958–969 (AKNARPSKKRKF) has biased composition (basic residues).

The protein belongs to the DEAD box helicase family. DDX54/DBP10 subfamily.

The protein resides in the nucleus. The protein localises to the nucleolus. The catalysed reaction is ATP + H2O = ADP + phosphate + H(+). Its function is as follows. ATP-binding RNA helicase involved in the biogenesis of 60S ribosomal subunits and is required for the normal formation of 25S and 5.8S rRNAs. The polypeptide is ATP-dependent RNA helicase DBP10 (DBP10) (Candida glabrata (strain ATCC 2001 / BCRC 20586 / JCM 3761 / NBRC 0622 / NRRL Y-65 / CBS 138) (Yeast)).